Consider the following 83-residue polypeptide: Cytochrome b559 subunit alpha (83 aa).

Residues 21-35 (VIHSITIPSLFIAGW) traverse the membrane as a helical segment. H23 contacts heme.

This sequence belongs to the PsbE/PsbF family. In terms of assembly, heterodimer of an alpha subunit and a beta subunit. PSII is composed of 1 copy each of membrane proteins PsbA, PsbB, PsbC, PsbD, PsbE, PsbF, PsbH, PsbI, PsbJ, PsbK, PsbL, PsbM, PsbT, PsbX, PsbY, PsbZ, Psb30/Ycf12, at least 3 peripheral proteins of the oxygen-evolving complex and a large number of cofactors. It forms dimeric complexes. Heme b serves as cofactor.

The protein localises to the plastid. The protein resides in the chloroplast thylakoid membrane. Its function is as follows. This b-type cytochrome is tightly associated with the reaction center of photosystem II (PSII). PSII is a light-driven water:plastoquinone oxidoreductase that uses light energy to abstract electrons from H(2)O, generating O(2) and a proton gradient subsequently used for ATP formation. It consists of a core antenna complex that captures photons, and an electron transfer chain that converts photonic excitation into a charge separation. This is Cytochrome b559 subunit alpha from Citrus sinensis (Sweet orange).